The sequence spans 109 residues: uncharacterized protein (109 aa).

The N-terminal stretch at 1-25 (MKGIFLVVQLGFSIMVFLFLAAVNW) is a signal peptide. A helical membrane pass occupies residues 73-95 (YPVMSALMIISFLYVLAALFLLI).

Its subcellular location is the membrane. This is an uncharacterized protein from Bacillus subtilis (strain 168).